A 138-amino-acid polypeptide reads, in one-letter code: Large ribosomal subunit protein uL16 (138 aa).

The protein belongs to the universal ribosomal protein uL16 family. In terms of assembly, part of the 50S ribosomal subunit.

In terms of biological role, binds 23S rRNA and is also seen to make contacts with the A and possibly P site tRNAs. The polypeptide is Large ribosomal subunit protein uL16 (Acholeplasma laidlawii (strain PG-8A)).